A 439-amino-acid polypeptide reads, in one-letter code: Trigger factor (439 aa).

Positions 163–248 (GDIAVIDFEG…LNQIKERVLP (86 aa)) constitute a PPIase FKBP-type domain.

It belongs to the FKBP-type PPIase family. Tig subfamily.

It localises to the cytoplasm. It catalyses the reaction [protein]-peptidylproline (omega=180) = [protein]-peptidylproline (omega=0). Involved in protein export. Acts as a chaperone by maintaining the newly synthesized protein in an open conformation. Functions as a peptidyl-prolyl cis-trans isomerase. This is Trigger factor from Syntrophotalea carbinolica (strain DSM 2380 / NBRC 103641 / GraBd1) (Pelobacter carbinolicus).